The following is a 258-amino-acid chain: HTH-type transcriptional repressor GlcR (258 aa).

An HTH deoR-type domain is found at 3–58 (QEERLVAILDFLKQHNRITTEQICTLLQVSRDTARRDLVKLEEQNAIIRTRGGAIL). The H-T-H motif DNA-binding region spans 20–39 (ITTEQICTLLQVSRDTARRD).

Plays a role in carbon catabolite repression (CCR). Specifically required for transcriptional repression of the levanase operon by glucose but not by other sugars. The protein is HTH-type transcriptional repressor GlcR (glcR) of Bacillus subtilis (strain 168).